The following is a 192-amino-acid chain: Na(+)-translocating ferredoxin:NAD(+) oxidoreductase complex subunit A (192 aa).

Transmembrane regions (helical) follow at residues 4-24, 38-58, 71-91, 101-121, 133-153, and 169-189; these read IFIMISAIFVNNFVLSRFLGI, VGMGVAVTFVMALASAITYVV, LQTIAFILIIAALVQLVEMII, ALGVYLPLITTNCAVLGVALI, IFNGVGAALGFTLAIVLFAGI, and FPIALLTAGLMAIAFLGFSGM.

Belongs to the NqrDE/RnfAE family. As to quaternary structure, the complex is composed of six subunits: RnfA, RnfB, RnfC, RnfD, RnfE and RnfG.

It localises to the cell membrane. The enzyme catalyses 2 reduced [2Fe-2S]-[ferredoxin] + Na(+)(in) + NAD(+) + H(+) = 2 oxidized [2Fe-2S]-[ferredoxin] + Na(+)(out) + NADH. Part of a membrane-bound complex that couples electron transfer with translocation of ions across the membrane. Couples electron transfer from reduced ferredoxin to NAD(+) with electrogenic movement of Na(+) out of the cell. Involved in caffeate respiration. This is Na(+)-translocating ferredoxin:NAD(+) oxidoreductase complex subunit A from Acetobacterium woodii (strain ATCC 29683 / DSM 1030 / JCM 2381 / KCTC 1655 / WB1).